A 301-amino-acid polypeptide reads, in one-letter code: Aspartate carbamoyltransferase catalytic subunit (301 aa).

Positions 46 and 47 each coordinate carbamoyl phosphate. An L-aspartate-binding site is contributed by lysine 74. The carbamoyl phosphate site is built by arginine 96, histidine 124, and glutamine 127. 2 residues coordinate L-aspartate: arginine 157 and arginine 208. Residues alanine 249 and proline 250 each contribute to the carbamoyl phosphate site.

The protein belongs to the aspartate/ornithine carbamoyltransferase superfamily. ATCase family. As to quaternary structure, heterododecamer (2C3:3R2) of six catalytic PyrB chains organized as two trimers (C3), and six regulatory PyrI chains organized as three dimers (R2).

The enzyme catalyses carbamoyl phosphate + L-aspartate = N-carbamoyl-L-aspartate + phosphate + H(+). The protein operates within pyrimidine metabolism; UMP biosynthesis via de novo pathway; (S)-dihydroorotate from bicarbonate: step 2/3. In terms of biological role, catalyzes the condensation of carbamoyl phosphate and aspartate to form carbamoyl aspartate and inorganic phosphate, the committed step in the de novo pyrimidine nucleotide biosynthesis pathway. This chain is Aspartate carbamoyltransferase catalytic subunit, found in Bacillus cereus (strain ATCC 14579 / DSM 31 / CCUG 7414 / JCM 2152 / NBRC 15305 / NCIMB 9373 / NCTC 2599 / NRRL B-3711).